The sequence spans 807 residues: Tyrosine-protein phosphatase non-receptor type 22 (807 aa).

A Tyrosine-protein phosphatase domain is found at 24 to 289 (FANEFLKLKR…ELVYNAVLEL (266 aa)). Ser-35 carries the phosphoserine; by PKC/PRKCD modification. An intrachain disulfide couples Cys-129 to Cys-227. Cys-227 functions as the Phosphocysteine intermediate in the catalytic mechanism. Residues 227 to 233 (CSAGCGR) and Gln-274 each bind substrate. 4 positions are modified to phosphoserine: Ser-449, Ser-635, Ser-684, and Ser-692. 2 disordered regions span residues 676 to 700 (SVKL…LPER) and 724 to 746 (SYPD…GKSF).

It belongs to the protein-tyrosine phosphatase family. Non-receptor class 4 subfamily. As to quaternary structure, interacts with CSK. Interacts with LPXN. Interacts with CBL. Interacts with TRAF3 (via MATH domain); the interaction promotes TRAF3 polyubiquitination. In terms of processing, phosphorylation on Ser-35 by PKC/PRKCD abrogates its ability to dephosphorylate and inactivate the SRC family kinases. In terms of tissue distribution, expressed in bone marrow, B and T-cells, PBMCs, natural killer cells, monocytes, dendritic cells and neutrophils. Both isoform 1 and 4 are predominantly expressed in lymphoid tissues and cells. Isoform 1 is expressed in thymocytes and both mature B and T-cells.

Its subcellular location is the cytoplasm. The catalysed reaction is O-phospho-L-tyrosyl-[protein] + H2O = L-tyrosyl-[protein] + phosphate. It catalyses the reaction N-(5Z,8Z,11Z,14Z-eicosatetraenoyl)-ethanolamine phosphate + H2O = N-(5Z,8Z,11Z,14Z-eicosatetraenoyl)-ethanolamine + phosphate. Its activity is regulated as follows. Down-regulated by phosphorylation. In terms of biological role, acts as a negative regulator of T-cell receptor (TCR) signaling by direct dephosphorylation of the Src family kinases LCK and FYN, ITAMs of the TCRz/CD3 complex, as well as ZAP70, VAV, VCP and other key signaling molecules. Associates with and probably dephosphorylates CBL. Dephosphorylates LCK at its activating 'Tyr-394' residue. Dephosphorylates ZAP70 at its activating 'Tyr-493' residue. Dephosphorylates the immune system activator SKAP2. Positively regulates toll-like receptor (TLR)-induced type 1 interferon production. Promotes host antiviral responses mediated by type 1 interferon. Regulates NOD2-induced pro-inflammatory cytokine secretion and autophagy. Acts as an activator of NLRP3 inflammasome assembly by mediating dephosphorylation of 'Tyr-861' of NLRP3. Dephosphorylates phospho-anandamide (p-AEA), an endocannabinoid to anandamide (also called N-arachidonoylethanolamide). This is Tyrosine-protein phosphatase non-receptor type 22 (PTPN22) from Homo sapiens (Human).